Reading from the N-terminus, the 119-residue chain is Ribonuclease P protein component (119 aa).

It belongs to the RnpA family. Consists of a catalytic RNA component (M1 or rnpB) and a protein subunit.

It carries out the reaction Endonucleolytic cleavage of RNA, removing 5'-extranucleotides from tRNA precursor.. In terms of biological role, RNaseP catalyzes the removal of the 5'-leader sequence from pre-tRNA to produce the mature 5'-terminus. It can also cleave other RNA substrates such as 4.5S RNA. The protein component plays an auxiliary but essential role in vivo by binding to the 5'-leader sequence and broadening the substrate specificity of the ribozyme. This is Ribonuclease P protein component from Escherichia fergusonii (strain ATCC 35469 / DSM 13698 / CCUG 18766 / IAM 14443 / JCM 21226 / LMG 7866 / NBRC 102419 / NCTC 12128 / CDC 0568-73).